We begin with the raw amino-acid sequence, 261 residues long: Mannose-specific lectin 2 (261 aa).

Residues 1-23 form the signal peptide; the sequence is MAKLLLFLLPAILGLLIPRSAVA. Bulb-type lectin domains follow at residues 26–131 and 145–252; these read TNYL…PWVP and DNLL…SKRS. Beta-D-mannose-binding positions include 51–55, tyrosine 59, tryptophan 63, glutamine 64, 170–174, tyrosine 178, and 182–185; these read QNDCN, QGDCN, and YGWQ. The Carbohydrate-binding motif 1 motif lies at 51–59; the sequence is QNDCNLVLY. 2 disulfide bridges follow: cysteine 54–cysteine 74 and cysteine 173–cysteine 195. The Carbohydrate-binding motif 2 motif lies at 170–178; the sequence is QGDCNLVLY.

Forms heterotetramer of 2 chains 1 and 2 chains 2 arranged as a dimer of chain 1 and chain 2 heterodimers.

Its function is as follows. Mannose-specific lectin. Shows agglutinating activity towards erythrocytes from rabbit. This Colocasia esculenta (Wild taro) protein is Mannose-specific lectin 2.